The chain runs to 97 residues: C-C motif chemokine 7 (97 aa).

Residues 1-23 (MQISAALLCVLLTAAAFTVHVWA) form the signal peptide. Residue Q24 is modified to Pyrrolidone carboxylic acid. N-linked (GlcNAc...) asparagine glycosylation is present at N29. Disulfide bonds link C33–C57 and C34–C73.

The protein belongs to the intercrine beta (chemokine CC) family. As to quaternary structure, monomer. Interacts with TNFAIP6 (via Link domain).

The protein resides in the secreted. Chemotactic factor that attracts monocytes and eosinophils, but not neutrophils. Augments monocyte anti-tumor activity. This chain is C-C motif chemokine 7 (Ccl7), found in Rattus norvegicus (Rat).